The sequence spans 122 residues: Large ribosomal subunit protein uL14 (122 aa).

It belongs to the universal ribosomal protein uL14 family. Part of the 50S ribosomal subunit. Forms a cluster with proteins L3 and L19. In the 70S ribosome, L14 and L19 interact and together make contacts with the 16S rRNA in bridges B5 and B8.

In terms of biological role, binds to 23S rRNA. Forms part of two intersubunit bridges in the 70S ribosome. The polypeptide is Large ribosomal subunit protein uL14 (Leifsonia xyli subsp. xyli (strain CTCB07)).